The primary structure comprises 703 residues: Polyribonucleotide nucleotidyltransferase (703 aa).

Mg(2+) contacts are provided by Asp-485 and Asp-491. The KH domain occupies 552–611 (PRAYTINIDTDKIRTLIGTGGKTINKIIEETGVKIDIREDGTVFVLSSDADSANRALKMI). The 69-residue stretch at 621 to 689 (GEVYLGKVTK…NQGRVNLSRK (69 aa)) folds into the S1 motif domain.

This sequence belongs to the polyribonucleotide nucleotidyltransferase family. It depends on Mg(2+) as a cofactor.

It is found in the cytoplasm. It carries out the reaction RNA(n+1) + phosphate = RNA(n) + a ribonucleoside 5'-diphosphate. In terms of biological role, involved in mRNA degradation. Catalyzes the phosphorolysis of single-stranded polyribonucleotides processively in the 3'- to 5'-direction. This Clostridium acetobutylicum (strain ATCC 824 / DSM 792 / JCM 1419 / IAM 19013 / LMG 5710 / NBRC 13948 / NRRL B-527 / VKM B-1787 / 2291 / W) protein is Polyribonucleotide nucleotidyltransferase.